The primary structure comprises 437 residues: GTPase Der (437 aa).

EngA-type G domains are found at residues 4-168 (NIVA…PEKP) and 178-353 (PRFA…ENRK). Residues 10–17 (GRPNVGKS), 57–61 (DTGGY), 120–123 (NKVD), 184–191 (GRPNAGKS), 231–235 (DTAGI), and 296–299 (NKWD) each bind GTP. The region spanning 354 to 437 (QRISTSKFNE…VPIDIYIREK (84 aa)) is the KH-like domain.

It belongs to the TRAFAC class TrmE-Era-EngA-EngB-Septin-like GTPase superfamily. EngA (Der) GTPase family. Associates with the 50S ribosomal subunit.

Its function is as follows. GTPase that plays an essential role in the late steps of ribosome biogenesis. This is GTPase Der from Flavobacterium johnsoniae (strain ATCC 17061 / DSM 2064 / JCM 8514 / BCRC 14874 / CCUG 350202 / NBRC 14942 / NCIMB 11054 / UW101) (Cytophaga johnsonae).